A 398-amino-acid chain; its full sequence is Phosphoglycerate kinase (398 aa).

Substrate-binding positions include 21 to 23 (DFN), Arg-36, 59 to 62 (HLGR), Arg-119, and Arg-157. Residues Lys-208, Gly-296, Glu-327, and 354 to 357 (GGDS) contribute to the ATP site.

It belongs to the phosphoglycerate kinase family. Monomer.

The protein localises to the cytoplasm. The enzyme catalyses (2R)-3-phosphoglycerate + ATP = (2R)-3-phospho-glyceroyl phosphate + ADP. Its pathway is carbohydrate degradation; glycolysis; pyruvate from D-glyceraldehyde 3-phosphate: step 2/5. In Streptococcus pyogenes serotype M18 (strain MGAS8232), this protein is Phosphoglycerate kinase.